The primary structure comprises 424 residues: Chloroquine resistance transporter (424 aa).

The segment covering methionine 1 to glycine 10 has biased composition (basic residues). The tract at residues methionine 1–glutamate 32 is disordered. Topologically, residues methionine 1–asparagine 57 are cytoplasmic. Positions proline 16–asparagine 29 are enriched in basic and acidic residues. A helical transmembrane segment spans residues isoleucine 58 to alanine 78. At lysine 79 to serine 89 the chain is on the vacuolar side. N-linked (GlcNAc...) asparagine glycosylation occurs at asparagine 87. The chain crosses the membrane as a helical span at residues phenylalanine 90–methionine 110. The Cytoplasmic portion of the chain corresponds to phenylalanine 111–asparagine 124. The helical transmembrane segment at phenylalanine 125–isoleucine 145 threads the bilayer. Residues glycine 146–asparagine 153 are Vacuolar-facing. Residues isoleucine 154 to leucine 174 traverse the membrane as a helical segment. Topologically, residues arginine 175–histidine 179 are cytoplasmic. The chain crosses the membrane as a helical span at residues leucine 180 to leucine 200. Residues serine 201–asparagine 208 are Vacuolar-facing. The helical transmembrane segment at serine 209–threonine 229 threads the bilayer. The Cytoplasmic portion of the chain corresponds to arginine 230 to alanine 246. The chain crosses the membrane as a helical span at residues valine 247–phenylalanine 267. Over leucine 268 to lysine 316 the chain is Vacuolar. 2 cysteine pairs are disulfide-bonded: cysteine 288–cysteine 311 and cysteine 300–cysteine 308. A helical membrane pass occupies residues threonine 317–glutamate 337. Over lysine 338–threonine 345 the chain is Cytoplasmic. A helical transmembrane segment spans residues isoleucine 346–glycine 366. Residues aspartate 367–aspartate 376 lie on the Vacuolar side of the membrane. Residues phenylalanine 377–leucine 397 form a helical membrane-spanning segment. The Cytoplasmic portion of the chain corresponds to glutamate 398–histidine 424.

This sequence belongs to the CRT-like transporter family.

The protein resides in the vacuole membrane. Nutrient transporter. Involved in maintaining the osmotic homeostasis of the digestive vacuole. This chain is Chloroquine resistance transporter, found in Plasmodium vivax (strain Salvador I).